The chain runs to 757 residues: MGSPSLYSARKTTLALAVALSFAWQAPVFAHGGEAHMVPMDKTLKEFGADVQWDDYAQLFTLIKDGAYVKVKPGAQTAIVNGQPLALQVPVVMKDNKAWVSDTFINDVFQSGLDQTFQVEKRPHPLNALTADEIKQAVEIVKASADFKPNTRFTEISLLPPDKEAVWAFALENKPVDQPRKADVIMLDGKHIIEAVVDLQNNKLLSWQPIKDAHGMVLLDDFASVQNIINNSEEFAAAVKKRGITDAKKVITTPLTVGYFDGKDGLKQDARLLKVISYLDVGDGNYWAHPIENLVAVVDLEQKKIVKIEEGPVVPVPMTARPFDGRDRVAPAVKPMQIIEPEGKNYTITGDMIHWRNWDFHLSMNSRVGPMISTVTYNDNGTKRKVMYEGSLGGMIVPYGDPDIGWYFKAYLDSGDYGMGTLTSPIARGKDAPSNAVLLNETIADYTGVPMEIPRAIAVFERYAGPEYKHQEMGQPNVSTERRELVVRWISTVGNYDYIFDWIFHENGTIGIDAGATGIEAVKGVKAKTMHDETAKDDTRYGTLIDHNIVGTTHQHIYNFRLDLDVDGENNSLVAMDPVVKPNTAGGPRTSTMQVNQYNIGNEQDAAQKFDPGTIRLLSNPNKENRMGNPVSYQIIPYAGGTHPVAKGAQFAPDEWIYHRLSFMDKQLWVTRYHPGERFPEGKYPNRSTHDTGLGQYSKDNESLDNTDAVVWMTTGTTHVARAEEWPIMPTEWVHTLLKPWNFFDETPTLGALKKDK.

An N-terminal signal peptide occupies residues Met-1–Ala-30. Residues Tyr-411–Leu-422 and Val-493–Tyr-498 contribute to the substrate site. The active-site Proton acceptor is the Asp-413. Tyr-496 (schiff-base intermediate with substrate; via topaquinone) is an active-site residue. 2',4',5'-topaquinone is present on Tyr-496. 2 residues coordinate Cu cation: His-554 and His-556. Ca(2+) contacts are provided by Asp-563, Leu-564, Asp-565, Glu-603, Tyr-697, Asp-700, Glu-702, Asp-708, and Ala-709. A Mn(2+)-binding site is contributed by Asp-563. Asp-565 is a Mn(2+) binding site. Positions Pro-680–Asn-701 are disordered. Mn(2+) is bound at residue Asp-708. Position 719 (His-719) interacts with Cu cation.

Belongs to the copper/topaquinone oxidase family. In terms of assembly, homodimer. The cofactor is Cu cation. It depends on Zn(2+) as a cofactor. Ca(2+) is required as a cofactor. L-topaquinone serves as cofactor. Requires Mn(2+) as cofactor. In terms of processing, topaquinone (TPQ) is generated by copper-dependent autoxidation of a specific tyrosyl residue.

It localises to the periplasm. The enzyme catalyses a primary methyl amine + O2 + H2O = an aldehyde + H2O2 + NH4(+). The catalysed reaction is 2-phenylethylamine + O2 + H2O = 2-phenylacetaldehyde + H2O2 + NH4(+). It participates in amino-acid degradation; L-phenylalanine degradation; phenylacetate from L-phenylalanine: step 2/3. With respect to regulation, inhibited by 2-hydrazinopyridine. The enzyme prefers aromatic over aliphatic amines. In Escherichia coli (strain K12), this protein is Primary amine oxidase (tynA).